The following is a 432-amino-acid chain: PC-esterase domain-containing protein 1B (432 aa).

2 disordered regions span residues 264–293 (EWIK…LSPP) and 398–432 (RGFG…PRPQ).

The protein belongs to the PC-esterase family.

The protein is PC-esterase domain-containing protein 1B of Homo sapiens (Human).